A 352-amino-acid polypeptide reads, in one-letter code: Histidine biosynthesis bifunctional protein HisB (352 aa).

The interval 1-163 (MKKILFIDRD…MVASAIINDA (163 aa)) is histidinol-phosphatase. Catalysis depends on aspartate 8, which acts as the Nucleophile. Residues aspartate 8 and aspartate 10 each coordinate Mg(2+). The Proton donor role is filled by aspartate 10. Zn(2+) is bound by residues cysteine 91, histidine 93, cysteine 99, and cysteine 101. Residue aspartate 128 participates in Mg(2+) binding. The segment at 164–352 (RKASVQRKTK…NYLPSTKGVL (189 aa)) is imidazoleglycerol-phosphate dehydratase.

This sequence in the N-terminal section; belongs to the histidinol-phosphatase family. In the C-terminal section; belongs to the imidazoleglycerol-phosphate dehydratase family. Mg(2+) serves as cofactor. It depends on Zn(2+) as a cofactor.

It is found in the cytoplasm. The enzyme catalyses D-erythro-1-(imidazol-4-yl)glycerol 3-phosphate = 3-(imidazol-4-yl)-2-oxopropyl phosphate + H2O. The catalysed reaction is L-histidinol phosphate + H2O = L-histidinol + phosphate. It participates in amino-acid biosynthesis; L-histidine biosynthesis; L-histidine from 5-phospho-alpha-D-ribose 1-diphosphate: step 6/9. Its pathway is amino-acid biosynthesis; L-histidine biosynthesis; L-histidine from 5-phospho-alpha-D-ribose 1-diphosphate: step 8/9. The protein is Histidine biosynthesis bifunctional protein HisB of Legionella pneumophila subsp. pneumophila (strain Philadelphia 1 / ATCC 33152 / DSM 7513).